We begin with the raw amino-acid sequence, 821 residues long: BDNF/NT-3 growth factors receptor (821 aa).

The first 31 residues, 1–31 (MSPWLKWHGPAMARLWGLCLLVLGFWRASLA), serve as a signal peptide directing secretion. 2 cysteine pairs are disulfide-bonded: Cys-32/Cys-38 and Cys-36/Cys-45. An LRRNT domain is found at 32–61 (CPTSCKCSSARIWCTEPSPGIVAFPRLEPN). Topologically, residues 32-429 (CPTSCKCSSA…DVADQSNREH (398 aa)) are extracellular. 3 N-linked (GlcNAc...) asparagine glycosylation sites follow: Asn-67, Asn-95, and Asn-121. LRR repeat units follow at residues 92–113 (GLRN…AFLK) and 116–137 (NLRH…HFRH). The LRRCT domain occupies 148–196 (NPFTCSCDIMWLKTLQETKSSPDTQDLYCLNESSKNMPLANLQIPNCGL). 2 disulfides stabilise this stretch: Cys-152/Cys-176 and Cys-154/Cys-194. Asn-178, Asn-205, Asn-241, Asn-254, Asn-280, Asn-325, Asn-338, Asn-350, and Asn-411 each carry an N-linked (GlcNAc...) asparagine glycan. Ig-like C2-type domains follow at residues 197-282 (PSAR…VNLT) and 301-365 (WCIP…MAKN). Cys-218 and Cys-266 are joined by a disulfide. Cys-302 and Cys-345 are oxidised to a cystine. A helical transmembrane segment spans residues 430 to 453 (LSVYAVVVIASVVGFCLLVMLLLL). Positions 454 to 465 (KLARHSKFGMKG) are interaction with MAPK8IP3/JIP3. The Cytoplasmic segment spans residues 454 to 821 (KLARHSKFGM…ASPVYLDILG (368 aa)). Residues 474 to 497 (DDSASPLHHISNGSNTPSSSEGGP) are disordered. Positions 484–494 (SNGSNTPSSSE) are enriched in polar residues. Tyr-515 is modified (phosphotyrosine). One can recognise a Protein kinase domain in the interval 537–806 (IVLKRELGEG…KNIKSIHTLL (270 aa)). Residues 543 to 551 (LGEGAFGKV) and Lys-571 each bind ATP. Catalysis depends on Asp-675, which acts as the Proton acceptor. Phosphotyrosine; by autocatalysis is present on residues Tyr-701, Tyr-705, Tyr-706, and Tyr-816.

The protein belongs to the protein kinase superfamily. Tyr protein kinase family. Insulin receptor subfamily. Exists in a dynamic equilibrium between monomeric (low affinity) and dimeric (high affinity) structures. Interacts (phosphorylated upon activation by BDNF) with SHC1; mediates SHC1 phosphorylation and activation. Interacts (phosphorylated upon activation by BDNF) with PLCG1 and/or PLCG2; mediates PLCG1 phosphorylation and activation. Interacts with SH2B1 and SH2B2. Interacts with NGFR; may regulate the ligand specificity of the receptor. Interacts with SORCS2; this interaction is important for normal targeting to post-synaptic densities in response to high-frequency stimulation. Interacts (phosphorylated upon ligand-binding) with SH2D1A; regulates NTRK2. Interacts with SQSTM1 and KIDINS220. Interacts (phosphorylated upon ligand-binding) with FRS2; activates the MAPK signaling pathway. Interacts with APPL1. Interacts with MAPK8IP3/JIP3 and KLC1; interaction with KLC1 is mediated by MAPK8IP3/JIP3. Interacts with SORL1; this interaction facilitates NTRK2 trafficking between synaptic plasma membranes, postsynaptic densities and cell soma, hence positively regulates BDNF signaling. Interacts with SLITRK2. In terms of processing, phosphorylated. Undergoes ligand-mediated autophosphorylation that is required for interaction with SHC1 and PLCG1 and other downstream effectors. Some isoforms are not phosphorylated. Post-translationally, ubiquitinated. Undergoes polyubiquitination upon activation; regulated by NGFR. Ubiquitination regulates the internalization of the receptor. As to expression, expressed in the brain, in neurons (at protein level). Detected in hippocampus (at protein level). Widely expressed in the central and peripheral nervous system. The different forms are differentially expressed in various cell types. Isoform GP95-TRKB is specifically expressed in glial cells.

Its subcellular location is the cell membrane. The protein resides in the endosome membrane. The protein localises to the early endosome membrane. It is found in the cell projection. It localises to the axon. Its subcellular location is the dendrite. The protein resides in the cytoplasm. The protein localises to the perinuclear region. It is found in the postsynaptic density. It carries out the reaction L-tyrosyl-[protein] + ATP = O-phospho-L-tyrosyl-[protein] + ADP + H(+). Its activity is regulated as follows. The formation of active receptors dimers able to fully transduce the ligand-mediated signal, may be negatively regulated by the formation of inactive heterodimers with the non-catalytic isoforms. The neuronal activity and the influx of calcium positively regulate the kinase activity and the internalization of the receptor which are both important for active signaling. Regulated by NGFR that may control the internalization of the receptor. NGFR may also stimulate the activation by BDNF compared to NTF3 and NTF4. SH2D1A inhibits the autophosphorylation of the receptor, and alters the recruitment and activation of downstream effectors and signaling cascades. In terms of biological role, receptor tyrosine kinase involved in the development and the maturation of the central and the peripheral nervous systems through regulation of neuron survival, proliferation, migration, differentiation, and synapse formation and plasticity. Receptor for BDNF/brain-derived neurotrophic factor and NTF4/neurotrophin-4. Alternatively can also bind NTF3/neurotrophin-3 which is less efficient in activating the receptor but regulates neuron survival through NTRK2. Upon ligand-binding, undergoes homodimerization, autophosphorylation and activation. Recruits, phosphorylates and/or activates several downstream effectors including SHC1, FRS2, SH2B1, SH2B2 and PLCG1 that regulate distinct overlapping signaling cascades. Through SHC1, FRS2, SH2B1, SH2B2 activates the GRB2-Ras-MAPK cascade that regulates for instance neuronal differentiation including neurite outgrowth. Through the same effectors controls the Ras-PI3 kinase-AKT1 signaling cascade that mainly regulates growth and survival. Through PLCG1 and the downstream protein kinase C-regulated pathways controls synaptic plasticity. Thereby, plays a role in learning and memory by regulating both short term synaptic function and long-term potentiation. PLCG1 also leads to NF-Kappa-B activation and the transcription of genes involved in cell survival. Hence, it is able to suppress anoikis, the apoptosis resulting from loss of cell-matrix interactions. Isoform GP95-TRKB may also play a role in neutrophin-dependent calcium signaling in glial cells and mediate communication between neurons and glia. The sequence is that of BDNF/NT-3 growth factors receptor from Mus musculus (Mouse).